Consider the following 253-residue polypeptide: Ribonuclease HII (253 aa).

Positions 32–223 (APVAGLDEAG…FKTSGEEDRI (192 aa)) constitute an RNase H type-2 domain. 3 residues coordinate a divalent metal cation: Asp38, Glu39, and Asp130.

The protein belongs to the RNase HII family. The cofactor is Mn(2+). It depends on Mg(2+) as a cofactor.

It is found in the cytoplasm. The enzyme catalyses Endonucleolytic cleavage to 5'-phosphomonoester.. Its function is as follows. Endonuclease that specifically degrades the RNA of RNA-DNA hybrids. The protein is Ribonuclease HII of Chelativorans sp. (strain BNC1).